The following is a 3974-amino-acid chain: Hybrid PKS-NRPS synthetase 1 (3974 aa).

The 438-residue stretch at 5-442 (SQKIAIIGSA…GTNAHCLIES (438 aa)) folds into the Ketosynthase family 3 (KS3) domain. Residues cysteine 179, histidine 316, and histidine 362 each act as for beta-ketoacyl synthase activity in the active site. The segment at 561–883 (IFTGQGAQWA…TGILERGLDD (323 aa)) is malonyl-CoA:ACP transacylase (MAT) domain. Positions 954 to 1079 (HPLLGSRLSA…HDSELGIPES (126 aa)) are N-terminal hotdog fold. The tract at residues 954-1251 (HPLLGSRLSA…QVESVKLVPV (298 aa)) is dehydratase (DH) domain. Residues 954–1257 (HPLLGSRLSA…LVPVITPDAS (304 aa)) form the PKS/mFAS DH domain. The active-site Proton acceptor; for dehydratase activity is histidine 986. The tract at residues 1107–1257 (TTPISSAKIY…LVPVITPDAS (151 aa)) is C-terminal hotdog fold. Aspartate 1165 serves as the catalytic Proton donor; for dehydratase activity. A methyltransferase (MT) domain region spans residues 1398 to 1529 (PWNTELRNAI…GYLLLVAKTG (132 aa)). The segment at 2108–2282 (TYFLAGMTDS…ASIMDTGVVT (175 aa)) is ketoreductase (KR) domain. The interval 2492–2516 (AGRSASPGASCSDRSLSTRSDETRS) is disordered. Polar residues predominate over residues 2498-2509 (PGASCSDRSLST). The segment at 2560–2994 (APLSPGQAQL…LERLRTSSDQ (435 aa)) is condensation (C) domain. Residues 3021 to 3423 (DAMAEKYFDQ…DGSLILLGRM (403 aa)) form an adenylation (A) (KR) domain region. One can recognise a Carrier domain in the interval 3537–3613 (SADQLVEAEV…EMAEKMASVR (77 aa)). An O-(pantetheine 4'-phosphoryl)serine modification is found at serine 3573. Positions 3657-3940 (VVLTGAADLL…KLEMGEWIAL (284 aa)) are reductase (RED) domain.

This sequence in the C-terminal section; belongs to the NRP synthetase family.

The protein operates within secondary metabolite biosynthesis. In terms of biological role, hybrid PKS-NRPS synthetase; part of the hps1-dma1 gene cluster that probably mediates the biosynthesis a derivative of cyclopiazonic acid (CPA). The hybrid polyketide synthase-nonribosomal peptide synthetase (PKS-NRPS) nps1 might incorporates acetyl-CoA, malonyl-CoA, and tryptophan (Trp) and utilizes a C-terminal redox-incompetent reductase domain to make and release the tryptophan tetramic acid, cyclo-acetoacetyl-L-tryptophan (c-AATrp), as the first intermediate in the pathway. In addition, the cluster also includes the tryptophan dimethylallyltransferase dma1, the FAD-dependent oxidoreductase toxD, the cytochrome P450 monooxygenase cyp3.1 and the methyltransferase DOTSEDRAFT_139328; the latter 2 being not present in all CPA-producing fungi but involved in additional modifications that occur in biosynthesis the of a range of CPA and CPA-like products. Further studies are required to clarify whether the CPA-like hps1-dma1 cluster is functional or a non-functional relic reflecting evolution of D.septosporum. This is Hybrid PKS-NRPS synthetase 1 from Dothistroma septosporum (strain NZE10 / CBS 128990) (Red band needle blight fungus).